The following is a 290-amino-acid chain: Lysine export transcriptional regulatory protein LysG (290 aa).

The HTH lysR-type domain occupies 1 to 57 (MNPIQLDTLLSIIDEGSFEGASLALSISPSAVSQRVKALEHHVGRVLVSRTQPAKAT). A DNA-binding region (H-T-H motif) is located at residues 18–37 (FEGASLALSISPSAVSQRVK).

Belongs to the LysR transcriptional regulatory family.

Its function is as follows. Positively regulates the expression of the exporter LysE. Induction requires the presence of a coinducer, which is either intracellular L-lysine, L-arginine or L-citrulline. L-histidine also acts as a coinducer of lysE expression, but this amino acid is not exported by LysE. The lysEG system prevents bacteriostasis due to elevated L-lysine or L-arginine concentrations that arise during growth in the presence of peptides or in mutants possessing a deregulated biosynthesis pathway. This chain is Lysine export transcriptional regulatory protein LysG, found in Corynebacterium glutamicum (strain ATCC 13032 / DSM 20300 / JCM 1318 / BCRC 11384 / CCUG 27702 / LMG 3730 / NBRC 12168 / NCIMB 10025 / NRRL B-2784 / 534).